A 228-amino-acid chain; its full sequence is Cytochrome c oxidase subunit 2 (228 aa).

At 1–14 (MPHASQLSLQEAMG) the chain is on the mitochondrial intermembrane side. The chain crosses the membrane as a helical span at residues 15–45 (PTMEEVIFLHDHVLLLTCLMTMVITMFTLTA). Topologically, residues 46–59 (TTTALTHNDPTEEV) are mitochondrial matrix. Residues 60–87 (EQLEAAWTVAPIMILILTALPSVRSLYL) form a helical membrane-spanning segment. The Mitochondrial intermembrane portion of the chain corresponds to 88–228 (MEEVFNPYLT…HFEQWLISEQ (141 aa)). The Cu cation site is built by H162, C197, E199, C201, H205, and M208. E199 contributes to the Mg(2+) binding site.

Belongs to the cytochrome c oxidase subunit 2 family. As to quaternary structure, component of the cytochrome c oxidase (complex IV, CIV), a multisubunit enzyme composed of 14 subunits. The complex is composed of a catalytic core of 3 subunits MT-CO1, MT-CO2 and MT-CO3, encoded in the mitochondrial DNA, and 11 supernumerary subunits COX4I, COX5A, COX5B, COX6A, COX6B, COX6C, COX7A, COX7B, COX7C, COX8 and NDUFA4, which are encoded in the nuclear genome. The complex exists as a monomer or a dimer and forms supercomplexes (SCs) in the inner mitochondrial membrane with NADH-ubiquinone oxidoreductase (complex I, CI) and ubiquinol-cytochrome c oxidoreductase (cytochrome b-c1 complex, complex III, CIII), resulting in different assemblies (supercomplex SCI(1)III(2)IV(1) and megacomplex MCI(2)III(2)IV(2)). Found in a complex with TMEM177, COA6, COX18, COX20, SCO1 and SCO2. Interacts with TMEM177 in a COX20-dependent manner. Interacts with COX20. Interacts with COX16. It depends on Cu cation as a cofactor.

Its subcellular location is the mitochondrion inner membrane. It catalyses the reaction 4 Fe(II)-[cytochrome c] + O2 + 8 H(+)(in) = 4 Fe(III)-[cytochrome c] + 2 H2O + 4 H(+)(out). In terms of biological role, component of the cytochrome c oxidase, the last enzyme in the mitochondrial electron transport chain which drives oxidative phosphorylation. The respiratory chain contains 3 multisubunit complexes succinate dehydrogenase (complex II, CII), ubiquinol-cytochrome c oxidoreductase (cytochrome b-c1 complex, complex III, CIII) and cytochrome c oxidase (complex IV, CIV), that cooperate to transfer electrons derived from NADH and succinate to molecular oxygen, creating an electrochemical gradient over the inner membrane that drives transmembrane transport and the ATP synthase. Cytochrome c oxidase is the component of the respiratory chain that catalyzes the reduction of oxygen to water. Electrons originating from reduced cytochrome c in the intermembrane space (IMS) are transferred via the dinuclear copper A center (CU(A)) of subunit 2 and heme A of subunit 1 to the active site in subunit 1, a binuclear center (BNC) formed by heme A3 and copper B (CU(B)). The BNC reduces molecular oxygen to 2 water molecules using 4 electrons from cytochrome c in the IMS and 4 protons from the mitochondrial matrix. This is Cytochrome c oxidase subunit 2 (MT-CO2) from Lycodon semicarinatus (Ryukyu odd-tooth snake).